Here is a 469-residue protein sequence, read N- to C-terminus: ATP synthase subunit beta (469 aa).

Position 157–164 (157–164) interacts with ATP; sequence GGAGVGKT.

Belongs to the ATPase alpha/beta chains family. In terms of assembly, F-type ATPases have 2 components, CF(1) - the catalytic core - and CF(0) - the membrane proton channel. CF(1) has five subunits: alpha(3), beta(3), gamma(1), delta(1), epsilon(1). CF(0) has three main subunits: a(1), b(2) and c(9-12). The alpha and beta chains form an alternating ring which encloses part of the gamma chain. CF(1) is attached to CF(0) by a central stalk formed by the gamma and epsilon chains, while a peripheral stalk is formed by the delta and b chains.

It localises to the cell membrane. The enzyme catalyses ATP + H2O + 4 H(+)(in) = ADP + phosphate + 5 H(+)(out). In terms of biological role, produces ATP from ADP in the presence of a proton gradient across the membrane. The catalytic sites are hosted primarily by the beta subunits. The sequence is that of ATP synthase subunit beta from Brevibacillus brevis (strain 47 / JCM 6285 / NBRC 100599).